Here is a 250-residue protein sequence, read N- to C-terminus: Cell division protein ZapD (250 aa).

Belongs to the ZapD family. As to quaternary structure, interacts with FtsZ.

It localises to the cytoplasm. Its function is as follows. Cell division factor that enhances FtsZ-ring assembly. Directly interacts with FtsZ and promotes bundling of FtsZ protofilaments, with a reduction in FtsZ GTPase activity. The protein is Cell division protein ZapD of Yersinia pestis bv. Antiqua (strain Antiqua).